A 572-amino-acid chain; its full sequence is Probable transporter MCH1 (572 aa).

Polar residues predominate over residues 1–29 (MSSSAPDDTQASRLDADQISTRSSSYASD). The interval 1-39 (MSSSAPDDTQASRLDADQISTRSSSYASDNDTDSTETRI) is disordered. An N-linked (GlcNAc...) asparagine glycan is attached at asparagine 30. 10 consecutive transmembrane segments (helical) span residues 50–70 (LLAF…VVFS), 89–109 (AVAI…GYIC), 116–136 (PLAL…AGVY), 159–179 (FLML…MAAV), 193–213 (GLAL…LSQA), 232–252 (VFRF…LGTF), 335–355 (LAFL…GTII), 426–446 (FMAF…SGLV), 459–479 (LVGA…TIIW), and 488–508 (YGLI…VYSA). Residue asparagine 515 is glycosylated (N-linked (GlcNAc...) asparagine). Residues 539–559 (PTYWAETITVWIAVGLLLWAW) traverse the membrane as a helical segment.

This sequence belongs to the major facilitator superfamily.

The protein resides in the vacuole membrane. Probable transporter. In Gibberella zeae (strain ATCC MYA-4620 / CBS 123657 / FGSC 9075 / NRRL 31084 / PH-1) (Wheat head blight fungus), this protein is Probable transporter MCH1 (MCH1).